Here is a 43-residue protein sequence, read N- to C-terminus: Metallothionein A (43 aa).

Residues 1-16 (SCAGSCKCKNCRCRSC) are beta. A divalent metal cation is bound by residues Cys-2, Cys-6, Cys-8, Cys-11, Cys-13, Cys-16, Cys-20, Cys-21, Cys-23, Cys-24, Cys-28, Cys-31, Cys-35, and Cys-37. Residues 17–43 (RKSCCSCCPAGCNNCAKGCVCKEPASS) form an alpha region.

It belongs to the metallothionein superfamily. Type 1 family.

Its function is as follows. Metallothioneins have a high content of cysteine residues that bind various heavy metals. The sequence is that of Metallothionein A from Colinus virginianus (Northern bobwhite).